Consider the following 148-residue polypeptide: Large ribosomal subunit protein bL9 (148 aa).

This sequence belongs to the bacterial ribosomal protein bL9 family.

In terms of biological role, binds to the 23S rRNA. The chain is Large ribosomal subunit protein bL9 from Bacillus mycoides (strain KBAB4) (Bacillus weihenstephanensis).